The primary structure comprises 161 residues: Nucleotide-binding protein ABO_0048 (161 aa).

It belongs to the YajQ family.

Nucleotide-binding protein. The chain is Nucleotide-binding protein ABO_0048 from Alcanivorax borkumensis (strain ATCC 700651 / DSM 11573 / NCIMB 13689 / SK2).